The following is a 187-amino-acid chain: Protein P18, mitochondrial (187 aa).

The N-terminal 17 residues, 1 to 17, are a transit peptide targeting the mitochondrion; it reads MRRLSSQLMCTAAAVRF. A disordered region spans residues 160 to 187; that stretch reads NAAKAKADGKEHPSTLAQQQSLFDIKIQ.

The protein resides in the mitochondrion inner membrane. Putative RNA-binding protein. The chain is Protein P18, mitochondrial from Leishmania tarentolae (Sauroleishmania tarentolae).